The primary structure comprises 202 residues: FMN-dependent NADH:quinone oxidoreductase 2 (202 aa).

FMN contacts are provided by residues Ser-9, 15–17 (SVS), 93–96 (MYNF), and 137–140 (SRGG).

It belongs to the azoreductase type 1 family. In terms of assembly, homodimer. Requires FMN as cofactor.

It carries out the reaction 2 a quinone + NADH + H(+) = 2 a 1,4-benzosemiquinone + NAD(+). It catalyses the reaction N,N-dimethyl-1,4-phenylenediamine + anthranilate + 2 NAD(+) = 2-(4-dimethylaminophenyl)diazenylbenzoate + 2 NADH + 2 H(+). Quinone reductase that provides resistance to thiol-specific stress caused by electrophilic quinones. In terms of biological role, also exhibits azoreductase activity. Catalyzes the reductive cleavage of the azo bond in aromatic azo compounds to the corresponding amines. The sequence is that of FMN-dependent NADH:quinone oxidoreductase 2 from Bradyrhizobium diazoefficiens (strain JCM 10833 / BCRC 13528 / IAM 13628 / NBRC 14792 / USDA 110).